A 250-amino-acid chain; its full sequence is Adenosine 5'-phosphosulfate reductase (250 aa).

Positions 119, 120, 202, and 205 each coordinate [4Fe-4S] cluster. The Nucleophile; cysteine thiosulfonate intermediate role is filled by cysteine 230.

It belongs to the PAPS reductase family. CysH subfamily. [4Fe-4S] cluster is required as a cofactor.

The protein resides in the cytoplasm. The catalysed reaction is [thioredoxin]-disulfide + sulfite + AMP + 2 H(+) = adenosine 5'-phosphosulfate + [thioredoxin]-dithiol. It functions in the pathway sulfur metabolism; hydrogen sulfide biosynthesis; sulfite from sulfate. Functionally, catalyzes the formation of sulfite from adenosine 5'-phosphosulfate (APS) using thioredoxin as an electron donor. In Burkholderia cepacia (Pseudomonas cepacia), this protein is Adenosine 5'-phosphosulfate reductase.